Consider the following 600-residue polypeptide: Proline--tRNA ligase (600 aa).

This sequence belongs to the class-II aminoacyl-tRNA synthetase family. ProS type 1 subfamily. Homodimer.

Its subcellular location is the cytoplasm. The enzyme catalyses tRNA(Pro) + L-proline + ATP = L-prolyl-tRNA(Pro) + AMP + diphosphate. In terms of biological role, catalyzes the attachment of proline to tRNA(Pro) in a two-step reaction: proline is first activated by ATP to form Pro-AMP and then transferred to the acceptor end of tRNA(Pro). As ProRS can inadvertently accommodate and process non-cognate amino acids such as alanine and cysteine, to avoid such errors it has two additional distinct editing activities against alanine. One activity is designated as 'pretransfer' editing and involves the tRNA(Pro)-independent hydrolysis of activated Ala-AMP. The other activity is designated 'posttransfer' editing and involves deacylation of mischarged Ala-tRNA(Pro). The misacylated Cys-tRNA(Pro) is not edited by ProRS. The sequence is that of Proline--tRNA ligase from Synechococcus elongatus (strain ATCC 33912 / PCC 7942 / FACHB-805) (Anacystis nidulans R2).